Consider the following 286-residue polypeptide: Acetylglutamate kinase (286 aa).

Residues 69–70 (GG), Arg91, and Asn185 each bind substrate.

Belongs to the acetylglutamate kinase family. ArgB subfamily.

It localises to the cytoplasm. It carries out the reaction N-acetyl-L-glutamate + ATP = N-acetyl-L-glutamyl 5-phosphate + ADP. It participates in amino-acid biosynthesis; L-arginine biosynthesis; N(2)-acetyl-L-ornithine from L-glutamate: step 2/4. In terms of biological role, catalyzes the ATP-dependent phosphorylation of N-acetyl-L-glutamate. This chain is Acetylglutamate kinase, found in Chlorobium chlorochromatii (strain CaD3).